We begin with the raw amino-acid sequence, 338 residues long: Phenylalanine--tRNA ligase alpha subunit (338 aa).

Residue E253 participates in Mg(2+) binding.

This sequence belongs to the class-II aminoacyl-tRNA synthetase family. Phe-tRNA synthetase alpha subunit type 1 subfamily. In terms of assembly, tetramer of two alpha and two beta subunits. Requires Mg(2+) as cofactor.

The protein resides in the cytoplasm. The enzyme catalyses tRNA(Phe) + L-phenylalanine + ATP = L-phenylalanyl-tRNA(Phe) + AMP + diphosphate + H(+). The polypeptide is Phenylalanine--tRNA ligase alpha subunit (Citrifermentans bemidjiense (strain ATCC BAA-1014 / DSM 16622 / JCM 12645 / Bem) (Geobacter bemidjiensis)).